We begin with the raw amino-acid sequence, 245 residues long: Bax inhibitor 1 (245 aa).

Over 1-30 (MADTANYINDRFQTFMNGLGDRYEPYVREH) the chain is Cytoplasmic. A helical transmembrane segment spans residues 31–51 (LSKVYMVLGSTAAATAMGAML). Over 52 to 55 (QMRD) the chain is Lumenal. A helical transmembrane segment spans residues 56–76 (FLDLGVLAAVATLVLVLGLHF). The Cytoplasmic segment spans residues 77–88 (YKDDGKNYYTRL). A helical membrane pass occupies residues 89–109 (GMLYAFGFCSGQTLGPLLGYI). Residues 110–115 (CSINPA) are Lumenal-facing. The helical transmembrane segment at 116-136 (IILSALTGTFVTFISLSLSAL) threads the bilayer. Residues 137-142 (LAEQGK) lie on the Cytoplasmic side of the membrane. A helical membrane pass occupies residues 143-163 (YLYLGGMLVSVINTMALLSLF). The Lumenal portion of the chain corresponds to 164–169 (NMVFKS). A helical transmembrane segment spans residues 170–190 (YFVQVTQLYVGVFVMAAFIVY). Topologically, residues 191–245 (DTQNIVEKCRNGNRDVVQHALDLFFDVLSMFRRLLIILTQKEERKQNERRQNKTK) are cytoplasmic.

This sequence belongs to the BI1 family.

It is found in the endoplasmic reticulum membrane. Its function is as follows. Suppressor of apoptosis. Modulates unfolded protein response signaling. Negatively regulates autophagy and autophagosome formation, especially during periods of nutrient deprivation, and reduces cell survival during starvation. The polypeptide is Bax inhibitor 1 (Drosophila melanogaster (Fruit fly)).